The following is a 544-amino-acid chain: Intercellular adhesion molecule 3 (544 aa).

An N-terminal signal peptide occupies residues 1-31 (MIASGPPPRVYWTSLIFLLLACCLLPTGAQG). Residues 32–486 (QTYQVRVEPK…MMDVQGRNPV (455 aa)) lie on the Extracellular side of the membrane. In terms of domain architecture, Ig-like C2-type 1 spans 48–105 (GEPLVVNCTLDCPGPGLISLETALSKEPHSRGLGWAAFRLTNVTGDMEILCSGICNKS). N-linked (GlcNAc...) asparagine glycosylation is found at N54, N89, N103, N112, N138, N190, N209, N243, N267, N296, N321, and N326. 2 cysteine pairs are disulfide-bonded: C55/C98 and C59/C102. The Ig-like C2-type 2 domain occupies 134–200 (GEELNLSCLV…FSCRSELDLR (67 aa)). A disulfide bond links C141 and C193. The region spanning 237–302 (ETSWPVNCSL…IVCNVTLGVE (66 aa)) is the Ig-like C2-type 3 domain. C244 and C295 are joined by a disulfide. An Ig-like C2-type 4 domain is found at 330–383 (GTPVTVTCAAGPQVQVMLDGVPAAVPGQPAQLQLKATEMDDRRTFFCNATLKVH). Cysteines 337 and 376 form a disulfide. N-linked (GlcNAc...) asparagine glycans are attached at residues N377, N390, and N456. An Ig-like C2-type 5 domain is found at 417–470 (KTMHILQCQARGNPNPQLQCLREGSKFKVPVGIPFLVLLNYSGTYSCQAASSRG). C424 and C463 are oxidised to a cystine. The chain crosses the membrane as a helical span at residues 487 to 511 (TINIVLGVLAILGLVTLAAASVYVF). Residues 512-544 (WVQRQHDIYHLTPRSTRWRLTSTQPVTVAEELS) are Cytoplasmic-facing.

The protein belongs to the immunoglobulin superfamily. ICAM family. As to quaternary structure, interacts with moesin/MSN. Leukocytes.

Its subcellular location is the membrane. Its function is as follows. ICAM proteins are ligands for the leukocyte adhesion protein LFA-1 (integrin alpha-L/beta-2). ICAM3 is also a ligand for integrin alpha-D/beta-2. In association with integrin alpha-L/beta-2, contributes to apoptotic neutrophil phagocytosis by macrophages. The protein is Intercellular adhesion molecule 3 (ICAM3) of Bos taurus (Bovine).